Consider the following 348-residue polypeptide: Cylicin-2 (348 aa).

Residues 25–347 (KKSWNQQHFA…DEKKDAKKKG (323 aa)) are 31 X 3 AA repeats of K-K-X. Disordered stretches follow at residues 35–59 (LLFPKPQRPGTKRRSKPSQIRDNTV) and 101–348 (PTRT…KKGK). 4 stretches are compositionally biased toward basic and acidic residues: residues 103–159 (RTVE…DAKK), 166–217 (KDAE…EKDS), 238–267 (KADEKKDEDGKKDANKGDESKDAKKDAKEI), and 276–342 (KPSS…EKKD). A run of 3 repeats spans residues 157-184 (AKKDSKKGKKDAEKGKDSATESEDEKGG), 185-212 (AKKDNKKDKKDSNKGKDSATESEGEKGG), and 213-240 (TEKDSKKGKKDSKKGKDSAIELQAVKAD). Positions 157-240 (AKKDSKKGKK…AIELQAVKAD (84 aa)) are 3 X approximate tandem repeats.

In terms of tissue distribution, testis.

It localises to the cytoplasm. It is found in the cytoskeleton. The protein resides in the perinuclear theca. The protein localises to the calyx. Its function is as follows. Plays a role in the establishment of normal sperm morphology during spermatogenesis. It is required for acrosome attachment to the nuclear envelope, and proper manchette elongation and disassembly. This chain is Cylicin-2 (CYLC2), found in Homo sapiens (Human).